Here is a 311-residue protein sequence, read N- to C-terminus: tRNA-cytidine(32) 2-sulfurtransferase (311 aa).

Positions 47–52 match the PP-loop motif motif; the sequence is SGGKDS. 3 residues coordinate [4Fe-4S] cluster: C122, C125, and C213.

This sequence belongs to the TtcA family. Homodimer. It depends on Mg(2+) as a cofactor. Requires [4Fe-4S] cluster as cofactor.

It is found in the cytoplasm. It catalyses the reaction cytidine(32) in tRNA + S-sulfanyl-L-cysteinyl-[cysteine desulfurase] + AH2 + ATP = 2-thiocytidine(32) in tRNA + L-cysteinyl-[cysteine desulfurase] + A + AMP + diphosphate + H(+). The protein operates within tRNA modification. Its function is as follows. Catalyzes the ATP-dependent 2-thiolation of cytidine in position 32 of tRNA, to form 2-thiocytidine (s(2)C32). The sulfur atoms are provided by the cysteine/cysteine desulfurase (IscS) system. This chain is tRNA-cytidine(32) 2-sulfurtransferase, found in Shigella boydii serotype 4 (strain Sb227).